We begin with the raw amino-acid sequence, 937 residues long: Isoleucine--tRNA ligase (937 aa).

The 'HIGH' region motif lies at 58–68 (PYANGNIHIGH). E560 contributes to the L-isoleucyl-5'-AMP binding site. The 'KMSKS' region signature appears at 601 to 605 (KMSKS). K604 is a binding site for ATP. Zn(2+)-binding residues include C900, C903, C920, and C923.

This sequence belongs to the class-I aminoacyl-tRNA synthetase family. IleS type 1 subfamily. Monomer. Zn(2+) serves as cofactor.

The protein localises to the cytoplasm. It catalyses the reaction tRNA(Ile) + L-isoleucine + ATP = L-isoleucyl-tRNA(Ile) + AMP + diphosphate. In terms of biological role, catalyzes the attachment of isoleucine to tRNA(Ile). As IleRS can inadvertently accommodate and process structurally similar amino acids such as valine, to avoid such errors it has two additional distinct tRNA(Ile)-dependent editing activities. One activity is designated as 'pretransfer' editing and involves the hydrolysis of activated Val-AMP. The other activity is designated 'posttransfer' editing and involves deacylation of mischarged Val-tRNA(Ile). The protein is Isoleucine--tRNA ligase of Thioalkalivibrio sulfidiphilus (strain HL-EbGR7).